Reading from the N-terminus, the 440-residue chain is Xaa-Pro dipeptidase (440 aa).

Mn(2+) contacts are provided by Asp-244, Asp-255, His-336, Glu-381, and Glu-420.

This sequence belongs to the peptidase M24B family. Bacterial-type prolidase subfamily. It depends on Mn(2+) as a cofactor.

The catalysed reaction is Xaa-L-Pro dipeptide + H2O = an L-alpha-amino acid + L-proline. Splits dipeptides with a prolyl residue in the C-terminal position. In Pseudoalteromonas translucida (strain TAC 125), this protein is Xaa-Pro dipeptidase.